The chain runs to 175 residues: Translation initiation factor IF-3 (175 aa).

The protein belongs to the IF-3 family. Monomer.

Its subcellular location is the cytoplasm. Its function is as follows. IF-3 binds to the 30S ribosomal subunit and shifts the equilibrium between 70S ribosomes and their 50S and 30S subunits in favor of the free subunits, thus enhancing the availability of 30S subunits on which protein synthesis initiation begins. The sequence is that of Translation initiation factor IF-3 from Staphylococcus saprophyticus subsp. saprophyticus (strain ATCC 15305 / DSM 20229 / NCIMB 8711 / NCTC 7292 / S-41).